Here is a 291-residue protein sequence, read N- to C-terminus: 3-hydroxy-5-phosphonooxypentane-2,4-dione thiolase (291 aa).

Catalysis depends on K203, which acts as the Schiff-base intermediate with substrate.

The protein belongs to the DeoC/FbaB aldolase family. As to quaternary structure, homodecamer.

Its subcellular location is the cytoplasm. It catalyses the reaction dihydroxyacetone phosphate + acetyl-CoA = 3-hydroxy-2,4-dioxopentyl phosphate + CoA. In terms of biological role, involved in the degradation of phospho-AI-2, thereby terminating induction of the lsr operon and closing the AI-2 signaling cycle. Catalyzes the transfer of an acetyl moiety from 3-hydroxy-5-phosphonooxypentane-2,4-dione to CoA to form glycerone phosphate and acetyl-CoA. In Escherichia coli (strain K12 / DH10B), this protein is 3-hydroxy-5-phosphonooxypentane-2,4-dione thiolase.